The primary structure comprises 324 residues: tRNA U34 carboxymethyltransferase (324 aa).

Carboxy-S-adenosyl-L-methionine is bound by residues Lys-91, Trp-105, Lys-110, Gly-130, Asp-152 to Ser-154, Ile-181 to Glu-182, Met-196, Tyr-200, and Arg-315.

This sequence belongs to the class I-like SAM-binding methyltransferase superfamily. CmoB family. As to quaternary structure, homotetramer.

It carries out the reaction carboxy-S-adenosyl-L-methionine + 5-hydroxyuridine(34) in tRNA = 5-carboxymethoxyuridine(34) in tRNA + S-adenosyl-L-homocysteine + H(+). Functionally, catalyzes carboxymethyl transfer from carboxy-S-adenosyl-L-methionine (Cx-SAM) to 5-hydroxyuridine (ho5U) to form 5-carboxymethoxyuridine (cmo5U) at position 34 in tRNAs. This chain is tRNA U34 carboxymethyltransferase, found in Aliivibrio salmonicida (strain LFI1238) (Vibrio salmonicida (strain LFI1238)).